Consider the following 692-residue polypeptide: DNA topoisomerase 4 subunit B (692 aa).

ATP contacts are provided by residues Y53, N93, D120, 162 to 168 (GLHGVGI), and K393. The 115-residue stretch at 473 to 587 (AELFIVEGDS…AGHLYLAVPP (115 aa)) folds into the Toprim domain. 3 residues coordinate Mg(2+): E479, D552, and D554.

This sequence belongs to the type II topoisomerase family. ParE type 1 subfamily. As to quaternary structure, heterotetramer composed of ParC and ParE. It depends on Mg(2+) as a cofactor. Mn(2+) is required as a cofactor. Ca(2+) serves as cofactor.

It carries out the reaction ATP-dependent breakage, passage and rejoining of double-stranded DNA.. Its function is as follows. Topoisomerase IV is essential for chromosome segregation. It relaxes supercoiled DNA. Performs the decatenation events required during the replication of a circular DNA molecule. This is DNA topoisomerase 4 subunit B from Bartonella bacilliformis (strain ATCC 35685 / KC583 / Herrer 020/F12,63).